The following is a 1262-amino-acid chain: Isoleucine--tRNA ligase, cytoplasmic (1262 aa).

At M1 the chain carries N-acetylmethionine. Residues 48-58 (PFATGLPHYGH) carry the 'HIGH' region motif. Residues 600–604 (KMSKR) carry the 'KMSKS' region motif. An ATP-binding site is contributed by K603. S1047 and S1049 each carry phosphoserine. A Phosphothreonine modification is found at T1058.

It belongs to the class-I aminoacyl-tRNA synthetase family. Part of a multisubunit complex that groups tRNA ligases for Arg (RARS1), Asp (DARS1), Gln (QARS1), Ile (IARS1), Leu (LARS1), Lys (KARS1), Met (MARS1) the bifunctional ligase for Glu and Pro (EPRS1) and the auxiliary subunits AIMP1/p43, AIMP2/p38 and EEF1E1/p18. In terms of tissue distribution, expressed in liver and muscle (at protein level).

The protein resides in the cytoplasm. The protein localises to the cytosol. The enzyme catalyses tRNA(Ile) + L-isoleucine + ATP = L-isoleucyl-tRNA(Ile) + AMP + diphosphate. Catalyzes the specific attachment of an amino acid to its cognate tRNA in a 2 step reaction: the amino acid (AA) is first activated by ATP to form AA-AMP and then transferred to the acceptor end of the tRNA. The protein is Isoleucine--tRNA ligase, cytoplasmic of Homo sapiens (Human).